A 214-amino-acid polypeptide reads, in one-letter code: Adenylate kinase (214 aa).

10–15 provides a ligand contact to ATP; it reads GAGKGT. Residues 30–59 form an NMP region; the sequence is STGDMFRAAIKAGTELGKQAKALMDEGKLV. AMP contacts are provided by residues T31, R36, 57–59, 85–88, and Q92; these read KLV and GFPR. The LID stretch occupies residues 122 to 159; the sequence is GRRVHQASGRSYHIVYNPPKVEGKDDVTGEDLIIRADD. Residues R123 and 132–133 each bind ATP; that span reads SY. R156 and R167 together coordinate AMP. Residue Q200 coordinates ATP.

It belongs to the adenylate kinase family. As to quaternary structure, monomer.

Its subcellular location is the cytoplasm. The catalysed reaction is AMP + ATP = 2 ADP. Its pathway is purine metabolism; AMP biosynthesis via salvage pathway; AMP from ADP: step 1/1. In terms of biological role, catalyzes the reversible transfer of the terminal phosphate group between ATP and AMP. Plays an important role in cellular energy homeostasis and in adenine nucleotide metabolism. It may be linked to the biosynthesis of lipopolysaccharide surface molecules, which are important for the pathogenesis of H.influenzae. This is Adenylate kinase from Haemophilus influenzae (strain ATCC 51907 / DSM 11121 / KW20 / Rd).